The chain runs to 116 residues: Ig heavy chain V region 3-6 (116 aa).

The first 18 residues, 1 to 18 (MKVLSLLYLLTAIPGILS), serve as a signal peptide directing secretion. Residues 19–48 (DVQLQESGPGLVKPSQSLSLTCSVTGYSIT) form a framework-1 region. Cysteine 40 and cysteine 114 form a disulfide bridge. Residues 49 to 53 (SGYYW) form a complementarity-determining-1 region. Positions 54–67 (NWIRQFPGNKLEWM) are framework-2. The complementarity-determining-2 stretch occupies residues 68–84 (GYISYDGSNNYNPSLKN). The interval 85-116 (RISITRDTSKNQFFLKLNSVTTEDTATYYCAR) is framework-3.

This Mus musculus (Mouse) protein is Ig heavy chain V region 3-6 (Ighv3-6).